The chain runs to 249 residues: Probable transcriptional regulatory protein Wbm0670 (249 aa).

It belongs to the TACO1 family.

The protein resides in the cytoplasm. The protein is Probable transcriptional regulatory protein Wbm0670 of Wolbachia sp. subsp. Brugia malayi (strain TRS).